Here is a 379-residue protein sequence, read N- to C-terminus: Alcohol dehydrogenase 1 (379 aa).

Zn(2+) is bound by residues C47, T49, H69, C99, C102, C105, C113, and C177. The an alcohol site is built by T49 and H69. An NAD(+)-binding site is contributed by T49. Residues 202–207, D226, R231, T272, V295, 295–297, F322, and R372 each bind NAD(+); these read GLGAVG and VGV.

This sequence belongs to the zinc-containing alcohol dehydrogenase family. In terms of assembly, homodimer. It depends on Zn(2+) as a cofactor.

It localises to the cytoplasm. It catalyses the reaction a primary alcohol + NAD(+) = an aldehyde + NADH + H(+). It carries out the reaction a secondary alcohol + NAD(+) = a ketone + NADH + H(+). In Cenchrus americanus (Pearl millet), this protein is Alcohol dehydrogenase 1 (ADH1).